A 440-amino-acid polypeptide reads, in one-letter code: Transposon Ty1-GR1 Gag polyprotein (440 aa).

A compositionally biased stretch (low complexity) spans 1–16 (MESQQLSQHSHISHGS). 3 disordered regions span residues 1–93 (MESQ…MMTQ), 126–173 (PQSQ…RPPP), and 352–440 (GSRN…PGTY). Polar residues-rich tracts occupy residues 48-60 (TKAN…TPAS), 71-93 (SPQT…MMTQ), and 127-152 (QSQF…GNTF). Low complexity predominate over residues 153–165 (TDSSSADSDMTST). Positions 299 to 401 (NNGIHINNKV…NSKSKTARAH (103 aa)) are RNA-binding. Low complexity predominate over residues 402-418 (NVSTSNNSPSTDNDSIS). S416 carries the phosphoserine modification. The span at 419-428 (KSTTEPIQLN) shows a compositional bias: polar residues. Positions 429-440 (NKHDLHLRPGTY) are enriched in basic and acidic residues.

As to quaternary structure, homotrimer.

The protein localises to the cytoplasm. In terms of biological role, capsid protein (CA) is the structural component of the virus-like particle (VLP), forming the shell that encapsulates the retrotransposons dimeric RNA genome. The particles are assembled from trimer-clustered units and there are holes in the capsid shells that allow for the diffusion of macromolecules. CA also has nucleocapsid-like chaperone activity, promoting primer tRNA(i)-Met annealing to the multipartite primer-binding site (PBS), dimerization of Ty1 RNA and initiation of reverse transcription. This is Transposon Ty1-GR1 Gag polyprotein (TY1A-GR1) from Saccharomyces cerevisiae (strain ATCC 204508 / S288c) (Baker's yeast).